Here is a 144-residue protein sequence, read N- to C-terminus: Maximins 3/H5 (144 aa).

The N-terminal stretch at Met-1 to Ala-18 is a signal peptide. Propeptides lie at residues Arg-19 to Arg-43 and Thr-74 to Arg-123. At Leu-143 the chain carries Leucine amide.

The protein belongs to the bombinin family. As to expression, expressed by the skin glands.

Its subcellular location is the secreted. In terms of biological role, maximin-3 shows antibacterial activity against both Gram-positive and Gram-negative bacteria. It also shows antimicrobial activity against the fungus C.albicans, but not against A.flavus nor P.uticale. It has little hemolytic activity. It possess a significant cytotoxicity against tumor cell lines. It possess a significant anti-HIV activity. It shows high spermicidal activity. Maximin-H5 shows antibacterial activity only against the Gram-positive bacteria S.aureus. The other bacterial and fungal strains tested were resistant to it. The presence of metal ions, like Zn(2+) and Mg(2+), did not increase its antimicrobial potency. Does not show hemolytic activity (in a concentration up to 80 uM). This is Maximins 3/H5 from Bombina maxima (Giant fire-bellied toad).